The sequence spans 201 residues: FMN-dependent NADH:quinone oxidoreductase (201 aa).

FMN-binding positions include Ser10, 16-18, 96-99, and 140-143; these read SQS, MYNF, and SRGG.

Belongs to the azoreductase type 1 family. In terms of assembly, homodimer. It depends on FMN as a cofactor.

It carries out the reaction 2 a quinone + NADH + H(+) = 2 a 1,4-benzosemiquinone + NAD(+). The catalysed reaction is N,N-dimethyl-1,4-phenylenediamine + anthranilate + 2 NAD(+) = 2-(4-dimethylaminophenyl)diazenylbenzoate + 2 NADH + 2 H(+). Its function is as follows. Quinone reductase that provides resistance to thiol-specific stress caused by electrophilic quinones. Also exhibits azoreductase activity. Catalyzes the reductive cleavage of the azo bond in aromatic azo compounds to the corresponding amines. In Escherichia coli O6:H1 (strain CFT073 / ATCC 700928 / UPEC), this protein is FMN-dependent NADH:quinone oxidoreductase.